Reading from the N-terminus, the 77-residue chain is U8-lycotoxin-Ls1s (77 aa).

The first 20 residues, 1-20 (MKLIIFTGLVLFAIVSLIEA), serve as a signal peptide directing secretion. Residues 21-26 (QAENER) constitute a propeptide that is removed on maturation.

Belongs to the neurotoxin 19 (CSTX) family. 08 (U8-Lctx) subfamily. Post-translationally, contains 4 disulfide bonds. Expressed by the venom gland.

It localises to the secreted. The polypeptide is U8-lycotoxin-Ls1s (Lycosa singoriensis (Wolf spider)).